The following is a 357-amino-acid chain: Alpha-2-macroglobulin receptor-associated protein (357 aa).

The signal sequence occupies residues 1-34; the sequence is MAPRRVRSFLRGLPALLLLLLFLGPWPAASHGGK. Residues 32–52 are disordered; the sequence is GGKYSREKNQPKPSPKRESGE. Basic and acidic residues predominate over residues 35–52; sequence YSREKNQPKPSPKRESGE. Residues Ser-50 and Ser-135 each carry the phosphoserine modification. A coiled-coil region spans residues 219-310; the sequence is SRHTELKEKL…AHEKLRHAES (92 aa). The segment at 237-353 is LDL receptor binding; that stretch reads RLRRVSHQGY…DLSGRISRAR (117 aa). The residue at position 248 (Thr-248) is a Phosphothreonine. N-linked (GlcNAc...) asparagine glycosylation occurs at Asn-268. Residues 354 to 357 carry the Prevents secretion from ER motif; sequence HNEL.

Belongs to the alpha-2-MRAP family. Interacts with the LRP1/alpha-2-macroglobulin receptor heavy and light chains; the interaction is transient and coincides with a reduction of ligand binding by the receptor. Interacts with LRP2/glycoprotein 330. Interacts with LRP1B; binding is followed by internalization and degradation. Interacts with LDLR. Interacts with SORL1. Interacts with LRP1; this interaction is followed by rapid internalization. In terms of processing, N-glycosylated.

Its subcellular location is the rough endoplasmic reticulum lumen. The protein localises to the endoplasmic reticulum-Golgi intermediate compartment lumen. It is found in the golgi apparatus. The protein resides in the cis-Golgi network. It localises to the golgi apparatus lumen. Its subcellular location is the endosome lumen. The protein localises to the cell surface. In terms of biological role, molecular chaperone for LDL receptor-related proteins that may regulate their ligand binding activity along the secretory pathway. This is Alpha-2-macroglobulin receptor-associated protein from Homo sapiens (Human).